Here is a 726-residue protein sequence, read N- to C-terminus: Beta-glucosidase cel3A (726 aa).

Positions 1-20 are cleaved as a signal peptide; it reads MASRLVAGLQVLALAGTATA. N223 and N592 each carry an N-linked (GlcNAc...) asparagine glycan.

It belongs to the glycosyl hydrolase 3 family.

The protein resides in the secreted. It catalyses the reaction Hydrolysis of terminal, non-reducing beta-D-glucosyl residues with release of beta-D-glucose.. It participates in glycan metabolism; cellulose degradation. Beta-glucosidases are one of a number of cellulolytic enzymes involved in the degradation of cellulosic biomass. Catalyzes the last step releasing glucose from the inhibitory cellobiose. Has a broad substrate specificity but preferentially hydrolyzes highly polymerized 1,3- and 1,4-beta-glucans. This Pyricularia oryzae (strain 70-15 / ATCC MYA-4617 / FGSC 8958) (Rice blast fungus) protein is Beta-glucosidase cel3A.